We begin with the raw amino-acid sequence, 151 residues long: MGSDDLSAGDKIQKGFQINYMILRDADTGKVIWQENKDFSAPDVEHEARVPVKILDMRAVSREINFSTIEAMENFRLDQKVLFKGRIMEEWFFEMGFVGANTTNTWQSTIEAAPESQMMPAKVLNGNVTIQTSFYDNETLITKSVVRLYYI.

This sequence belongs to the PDE6D/unc-119 family. As to quaternary structure, interacts with Pde6.

The protein resides in the nucleus. Its subcellular location is the cytoplasm. In Drosophila virilis (Fruit fly), this protein is Probable cGMP 3',5'-cyclic phosphodiesterase subunit delta.